We begin with the raw amino-acid sequence, 314 residues long: MKMVDELKGNLNSFLILLGIFSFLQFSFKQSFMFPSILPLNIPDSNLLLVIGNISFYFFFVFLLIVSMILSLTYKSLIPLTIILTISPFITLIPNYENSFLLYSLEIAILILGLASTIEGLIKSSLLSILLIPTLVLVNLGIYASILLNIFHNALFISYLTIYLISIAGYLAYVISWGKIKSLRNYIAISVGLLSMIPFIFFENIISHNRYLEILMNMILPSTLGITLYNPYHITLLVMALGLSTMGIVTSLIKGNVSSGVGYFLIITTVFLGIDGFSLLIYMLTPIIGFLVITSSEIESKRRLIDIISPTRNG.

Transmembrane regions (helical) follow at residues 47–67, 76–96, 102–122, 127–147, 155–175, 186–206, 233–253, and 264–284; these read LLLV…LIVS, SLIP…IPNY, LYSL…EGLI, LSIL…ASIL, LFIS…AYVI, YIAI…ENII, HITL…TSLI, and FLII…IYML.

It is found in the cell membrane. The sequence is that of Cytochrome b558/566 subunit B (cbsB) from Saccharolobus solfataricus (strain ATCC 35092 / DSM 1617 / JCM 11322 / P2) (Sulfolobus solfataricus).